A 193-amino-acid chain; its full sequence is Acyl carrier protein phosphodiesterase (193 aa).

This sequence belongs to the AcpH family.

It carries out the reaction holo-[ACP] + H2O = apo-[ACP] + (R)-4'-phosphopantetheine + H(+). In terms of biological role, converts holo-ACP to apo-ACP by hydrolytic cleavage of the phosphopantetheine prosthetic group from ACP. In Escherichia coli O6:H1 (strain CFT073 / ATCC 700928 / UPEC), this protein is Acyl carrier protein phosphodiesterase.